Consider the following 232-residue polypeptide: Small ribosomal subunit protein uS3 (232 aa).

Residues 39 to 107 (VRQFLTKELA…PAQINIAEVR (69 aa)) enclose the KH type-2 domain.

It belongs to the universal ribosomal protein uS3 family. In terms of assembly, part of the 30S ribosomal subunit. Forms a tight complex with proteins S10 and S14.

In terms of biological role, binds the lower part of the 30S subunit head. Binds mRNA in the 70S ribosome, positioning it for translation. The chain is Small ribosomal subunit protein uS3 from Yersinia pseudotuberculosis serotype O:1b (strain IP 31758).